The following is a 220-amino-acid chain: NAD(P)H-hydrate epimerase (220 aa).

The region spanning 6-203 is the YjeF N-terminal domain; that stretch reads ARHLTTLATG…SFDLPEALFH (198 aa). 53–57 serves as a coordination point for (6S)-NADPHX; that stretch reads HNGGV. Asn-54 and Asp-116 together coordinate K(+). Residues 120–126 and Asp-149 each bind (6S)-NADPHX; that span reads GMRLEGP. Residue Thr-152 coordinates K(+).

This sequence belongs to the NnrE/AIBP family. Requires K(+) as cofactor.

The enzyme catalyses (6R)-NADHX = (6S)-NADHX. It carries out the reaction (6R)-NADPHX = (6S)-NADPHX. Functionally, catalyzes the epimerization of the S- and R-forms of NAD(P)HX, a damaged form of NAD(P)H that is a result of enzymatic or heat-dependent hydration. This is a prerequisite for the S-specific NAD(P)H-hydrate dehydratase to allow the repair of both epimers of NAD(P)HX. The sequence is that of NAD(P)H-hydrate epimerase from Truepera radiovictrix (strain DSM 17093 / CIP 108686 / LMG 22925 / RQ-24).